A 395-amino-acid chain; its full sequence is General transcription factor IIH subunit 2 (395 aa).

The VWFA domain occupies 60 to 236 (HLYVVVDGSR…HYKELLTHHV (177 aa)). Y95 is modified (phosphotyrosine). The C4-type zinc-finger motif lies at 291 to 308 (CPQCRAKYCELPVECKIC).

The protein belongs to the GTF2H2 family. In terms of assembly, component of the TFIID-containing RNA polymerase II pre-initiation complex that is composed of TBP and at least GTF2A1, GTF2A2, GTF2E1, GTF2E2, GTF2F1, GTF2H2, GTF2H3, GTF2H4, GTF2H5, GTF2B, TCEA1, ERCC2 and ERCC3. Component of the 7-subunit TFIIH core complex composed of XPB/ERCC3, XPD/ERCC2, GTF2H1, GTF2H2, GTF2H3, GTF2H4 and GTF2H5, which is active in NER. The core complex associates with the 3-subunit CDK-activating kinase (CAK) module composed of CCNH/cyclin H, CDK7 and MNAT1 to form the 10-subunit holoenzyme (holo-TFIIH) active in transcription. Interacts with XPB, XPD, GTF2H1 and GTF2H3. (Microbial infection) Interacts with varicella-zoster virus IE63 protein. As to expression, widely expressed, with higher expression in skeletal muscle.

The protein localises to the nucleus. Functionally, component of the general transcription and DNA repair factor IIH (TFIIH) core complex, which is involved in general and transcription-coupled nucleotide excision repair (NER) of damaged DNA and, when complexed to CAK, in RNA transcription by RNA polymerase II. In NER, TFIIH acts by opening DNA around the lesion to allow the excision of the damaged oligonucleotide and its replacement by a new DNA fragment. In transcription, TFIIH has an essential role in transcription initiation. When the pre-initiation complex (PIC) has been established, TFIIH is required for promoter opening and promoter escape. Phosphorylation of the C-terminal tail (CTD) of the largest subunit of RNA polymerase II by the kinase module CAK controls the initiation of transcription. The N-terminus of GTF2H2 interacts with and regulates XPD whereas an intact C-terminus is required for a successful escape of RNAP II form the promoter. This is General transcription factor IIH subunit 2 (GTF2H2) from Homo sapiens (Human).